The following is a 224-amino-acid chain: Deoxyribose-phosphate aldolase (224 aa).

Catalysis depends on Asp-92, which acts as the Proton donor/acceptor. The active-site Schiff-base intermediate with acetaldehyde is Lys-155. The active-site Proton donor/acceptor is Lys-184.

It belongs to the DeoC/FbaB aldolase family. DeoC type 1 subfamily.

It is found in the cytoplasm. It catalyses the reaction 2-deoxy-D-ribose 5-phosphate = D-glyceraldehyde 3-phosphate + acetaldehyde. It participates in carbohydrate degradation; 2-deoxy-D-ribose 1-phosphate degradation; D-glyceraldehyde 3-phosphate and acetaldehyde from 2-deoxy-alpha-D-ribose 1-phosphate: step 2/2. Catalyzes a reversible aldol reaction between acetaldehyde and D-glyceraldehyde 3-phosphate to generate 2-deoxy-D-ribose 5-phosphate. The protein is Deoxyribose-phosphate aldolase of Clostridium perfringens (strain 13 / Type A).